The primary structure comprises 144 residues: HTH-type transcriptional regulator BilQ (144 aa).

Residues 1-134 (MEQTFAYYTT…LFTLLQKLGK (134 aa)) form the HTH marR-type domain. Positions 48–71 (QRELAAAVRADEGYAARSVEKLLQ) form a DNA-binding region, H-T-H motif.

In terms of biological role, transcription regulator that regulates expression of the bilirubin reductase operon (bilQ, bilR and bilS). The chain is HTH-type transcriptional regulator BilQ from Clostridium symbiosum (strain WAL-14163).